Consider the following 190-residue polypeptide: MDRTEQKSIIEGLLFVSGDEGIYPEQIAKVLEIEGNEVIDILEEMQKECEGAHRGLQIVQYAKVYRFATKKEHASYYQKLIEIPTAASLSQAALETLAIVAYRQPITRTEMEEIRGVKTDKALQTLVSHLLIKEMGRAEGPGRPILYGTTKEFLDTFGLKTLDDLPPLSEENEQMNEADLFFGSLQEISK.

It belongs to the ScpB family. As to quaternary structure, homodimer. Homodimerization may be required to stabilize the binding of ScpA to the Smc head domains. Component of a cohesin-like complex composed of ScpA, ScpB and the Smc homodimer, in which ScpA and ScpB bind to the head domain of Smc. The presence of the three proteins is required for the association of the complex with DNA.

The protein resides in the cytoplasm. Participates in chromosomal partition during cell division. May act via the formation of a condensin-like complex containing Smc and ScpA that pull DNA away from mid-cell into both cell halves. The protein is Segregation and condensation protein B of Bacillus thuringiensis subsp. konkukian (strain 97-27).